The chain runs to 432 residues: Gamma-glutamyl phosphate reductase (432 aa).

This sequence belongs to the gamma-glutamyl phosphate reductase family.

It is found in the cytoplasm. The catalysed reaction is L-glutamate 5-semialdehyde + phosphate + NADP(+) = L-glutamyl 5-phosphate + NADPH + H(+). The protein operates within amino-acid biosynthesis; L-proline biosynthesis; L-glutamate 5-semialdehyde from L-glutamate: step 2/2. In terms of biological role, catalyzes the NADPH-dependent reduction of L-glutamate 5-phosphate into L-glutamate 5-semialdehyde and phosphate. The product spontaneously undergoes cyclization to form 1-pyrroline-5-carboxylate. The polypeptide is Gamma-glutamyl phosphate reductase (Methylobacterium radiotolerans (strain ATCC 27329 / DSM 1819 / JCM 2831 / NBRC 15690 / NCIMB 10815 / 0-1)).